A 609-amino-acid polypeptide reads, in one-letter code: Chaperone protein DnaK (609 aa).

A Phosphothreonine; by autocatalysis modification is found at Thr173. Residues 580-609 form a disordered region; sequence QAAQGGGAEGQEPKKDNVVDADYEVVDDKK. Residues 598–609 are compositionally biased toward acidic residues; it reads VDADYEVVDDKK.

The protein belongs to the heat shock protein 70 family.

In terms of biological role, acts as a chaperone. This chain is Chaperone protein DnaK, found in Brevibacillus brevis (strain 47 / JCM 6285 / NBRC 100599).